Consider the following 433-residue polypeptide: Tol-Pal system protein TolB (433 aa).

Residues 1 to 21 (MRNLLRGMLVVICCMAGIVMA) form the signal peptide.

The protein belongs to the TolB family. The Tol-Pal system is composed of five core proteins: the inner membrane proteins TolA, TolQ and TolR, the periplasmic protein TolB and the outer membrane protein Pal. They form a network linking the inner and outer membranes and the peptidoglycan layer.

It is found in the periplasm. Functionally, part of the Tol-Pal system, which plays a role in outer membrane invagination during cell division and is important for maintaining outer membrane integrity. In Pseudomonas fluorescens (strain Pf0-1), this protein is Tol-Pal system protein TolB.